The sequence spans 497 residues: 3-octaprenyl-4-hydroxybenzoate carboxy-lyase (497 aa).

Asn175 is a Mn(2+) binding site. Prenylated FMN-binding positions include 178 to 180 (IYR), 192 to 194 (RWL), and 197 to 198 (RG). Glu241 is a Mn(2+) binding site. Residue Asp290 is the Proton donor of the active site.

Belongs to the UbiD family. Homohexamer. The cofactor is prenylated FMN. Mn(2+) serves as cofactor.

It localises to the cell membrane. It catalyses the reaction a 4-hydroxy-3-(all-trans-polyprenyl)benzoate + H(+) = a 2-(all-trans-polyprenyl)phenol + CO2. Its pathway is cofactor biosynthesis; ubiquinone biosynthesis. In terms of biological role, catalyzes the decarboxylation of 3-octaprenyl-4-hydroxy benzoate to 2-octaprenylphenol, an intermediate step in ubiquinone biosynthesis. The polypeptide is 3-octaprenyl-4-hydroxybenzoate carboxy-lyase (Shigella dysenteriae serotype 1 (strain Sd197)).